The primary structure comprises 554 residues: Urocanate hydratase (554 aa).

Residues Gly49 to Gly50, Gln127, Gly173 to Gly175, Glu193, Arg198, Asn239 to Ala240, Gln260 to His264, Tyr270 to Ile271, and Tyr319 each bind NAD(+). Cys407 is an active-site residue. Gly489 lines the NAD(+) pocket.

The protein belongs to the urocanase family. NAD(+) serves as cofactor.

The protein localises to the cytoplasm. It catalyses the reaction 4-imidazolone-5-propanoate = trans-urocanate + H2O. Its pathway is amino-acid degradation; L-histidine degradation into L-glutamate; N-formimidoyl-L-glutamate from L-histidine: step 2/3. Catalyzes the conversion of urocanate to 4-imidazolone-5-propionate. This is Urocanate hydratase from Bacillus velezensis (strain DSM 23117 / BGSC 10A6 / LMG 26770 / FZB42) (Bacillus amyloliquefaciens subsp. plantarum).